The following is a 77-amino-acid chain: Chassatide C13 (77 aa).

The first 24 residues, 1–24 (MAKFATQLLLFVLIASLVMLEVHA), serve as a signal peptide directing secretion. Positions 25 to 44 (SNTFQVPDLGKRLLMNRDPN) are cleaved as a propeptide — removed in mature form. Residues 45–75 (GFPCAESCVYIPCTVTALLGCSCRNRVCYRN) constitute a cross-link (cyclopeptide (Gly-Asn)). 3 disulfides stabilise this stretch: Cys48-Cys65, Cys52-Cys67, and Cys57-Cys72. The propeptide at 76–77 (EL) is removed in mature form.

In terms of processing, this is a cyclic peptide. Expressed in fruit and pedicel but not in root, leaf and stem (at protein level).

Its function is as follows. Probably participates in a plant defense mechanism. This is Chassatide C13 from Chassalia chartacea (Chassalia curviflora).